We begin with the raw amino-acid sequence, 149 residues long: MWYYLIAAVIIALDQFTKYLIVKYMELGESIPLIADVFHLTSHRNMGAAFGILQNRRWFFIAITAVVVIGIVISLIRLGKKQPRASLALSFVLGGAVGNFIDRAMSGQVVDFLDFTLIHFPIFNVADMAITIGVGILLLDVFLDGKKNR.

Transmembrane regions (helical) follow at residues 58–78 and 85–105; these read WFFI…LIRL and ASLA…DRAM. Active-site residues include D111 and D127. The helical transmembrane segment at 122–142 threads the bilayer; that stretch reads IFNVADMAITIGVGILLLDVF.

This sequence belongs to the peptidase A8 family.

The protein resides in the cell membrane. It catalyses the reaction Release of signal peptides from bacterial membrane prolipoproteins. Hydrolyzes -Xaa-Yaa-Zaa-|-(S,diacylglyceryl)Cys-, in which Xaa is hydrophobic (preferably Leu), and Yaa (Ala or Ser) and Zaa (Gly or Ala) have small, neutral side chains.. The protein operates within protein modification; lipoprotein biosynthesis (signal peptide cleavage). This protein specifically catalyzes the removal of signal peptides from prolipoproteins. This chain is Lipoprotein signal peptidase, found in Brevibacillus brevis (strain 47 / JCM 6285 / NBRC 100599).